The sequence spans 371 residues: Probable diguanylate cyclase DgcC (371 aa).

5 consecutive transmembrane segments (helical) span residues 46 to 66, 68 to 88, 112 to 132, 143 to 163, and 171 to 191; these read AVGLAGMFLPIASTLVSHPPP, WWWLVLVGWAFVWPHLAWQIA, WVGVMGVNVLPSTAMLMIMCL, FVAGLVLMVVSCLVTLELTGI, and PLEWWLSLPIIVIYPLLFGWV. Residues 240 to 371 form the GGDEF domain; sequence RDATLLIIDI…AGRNRTEVAA (132 aa). Mg(2+)-binding residues include D248 and I249. Positions 256 and 265 each coordinate substrate. D291 is a Mg(2+) binding site.

It depends on Mg(2+) as a cofactor.

It localises to the cell inner membrane. The enzyme catalyses 2 GTP = 3',3'-c-di-GMP + 2 diphosphate. It functions in the pathway purine metabolism; 3',5'-cyclic di-GMP biosynthesis. In terms of biological role, a probable diguanylate cyclase. The last member of a cascade of expressed proteins, its expression requires DgcM. DgcC production induces biosynthesis of cellulose in some E.coli isolates, but not in K12 strains. Cyclic-di-GMP is a second messenger which controls cell surface-associated traits in bacteria. In Escherichia coli (strain K12), this protein is Probable diguanylate cyclase DgcC.